A 513-amino-acid chain; its full sequence is Matrix metalloproteinase-27 (513 aa).

A signal peptide spans 1–17 (MKRLLLLFLFFITFSSA). Positions 18–98 (FPLVRMTENE…PRCGVPDVGQ (81 aa)) are cleaved as a propeptide — activation peptide. An N-linked (GlcNAc...) asparagine glycan is attached at Asn55. The Cysteine switch motif lies at 89 to 96 (PRCGVPDV). Cys91 contributes to the Zn(2+) binding site. Residue Asn110 is glycosylated (N-linked (GlcNAc...) asparagine). Residues Asp121 and Asp155 each coordinate Ca(2+). His165 lines the Zn(2+) pocket. Ca(2+) contacts are provided by Asp173, Gly174, and Val178. His181 provides a ligand contact to Zn(2+). 2 residues coordinate Ca(2+): Gly188 and Asp192. His194 is a binding site for Zn(2+). 2 residues coordinate Ca(2+): Asp196 and Glu199. His216 serves as a coordination point for Zn(2+). Glu217 is an active-site residue. Zn(2+) is bound by residues His220 and His226. Hemopexin repeat units lie at residues 276-325 (PHAC…WPSL), 326-371 (PADL…GFPG), 373-421 (VKKI…FPGI), and 422-465 (SIRV…WFQC). Cys279 and Cys465 are joined by a disulfide. Asp286 is a binding site for Ca(2+). Asp377 and Asp426 together coordinate Ca(2+). A glycan (N-linked (GlcNAc...) asparagine) is linked at Asn452. Residues 466–513 (KEPKNSSFGFDINKEKAHSGGIKILYHKSLSLFIFGIVHLLKNTSIYQ) form a required for retention in the endoplasmic reticulum region.

It belongs to the peptidase M10A family. Ca(2+) serves as cofactor. It depends on Zn(2+) as a cofactor. Post-translationally, N-glycosylated. In terms of tissue distribution, expressed in B-cells. Expressed in a subset of endometrial macrophages related to menstruation and in ovarian and peritoneal endometriotic lesions (at protein level).

It localises to the endoplasmic reticulum. Its function is as follows. Matrix metalloproteinases degrade protein components of the extracellular matrix such as fibronectin, laminin, gelatins and/or collagens. This is Matrix metalloproteinase-27 (MMP27) from Homo sapiens (Human).